The sequence spans 343 residues: Ribosomal RNA small subunit methyltransferase C (343 aa).

Belongs to the methyltransferase superfamily. RsmC family. As to quaternary structure, monomer.

The protein localises to the cytoplasm. The enzyme catalyses guanosine(1207) in 16S rRNA + S-adenosyl-L-methionine = N(2)-methylguanosine(1207) in 16S rRNA + S-adenosyl-L-homocysteine + H(+). In terms of biological role, specifically methylates the guanine in position 1207 of 16S rRNA in the 30S particle. The sequence is that of Ribosomal RNA small subunit methyltransferase C from Escherichia coli O157:H7.